Consider the following 171-residue polypeptide: Photosystem I assembly protein Ycf3 (171 aa).

3 TPR repeats span residues 35–68 (AFTY…EIDP), 72–105 (SYIL…NPSL), and 120–153 (GEQA…APSN).

This sequence belongs to the Ycf3 family.

It is found in the plastid. The protein resides in the chloroplast thylakoid membrane. Its function is as follows. Essential for the assembly of the photosystem I (PSI) complex. May act as a chaperone-like factor to guide the assembly of the PSI subunits. The protein is Photosystem I assembly protein Ycf3 of Angiopteris evecta (Mule's foot fern).